A 395-amino-acid polypeptide reads, in one-letter code: Acid ceramidase (395 aa).

Positions 1 to 21 (MLGRSRLTFVLLSVTVTCSVA) are cleaved as a signal peptide. Cys31 and Cys340 are disulfide-bonded. Residue Cys143 is the Nucleophile of the active site. N-linked (GlcNAc...) asparagine glycans are attached at residues Asn173, Asn259, Asn342, and Asn348. A disulfide bridge links Cys388 with Cys392.

It belongs to the acid ceramidase family. Heterodimer; disulfide-linked. The heterodimer is composed of the disulfide-linked alpha and beta chains produced by autocatalytic cleavage of the precursor. In terms of processing, N-glycosylated. Post-translationally, proteolytically cleaved into two chains alpha and beta that remain associated via a disulfide bond. Cleavage gives rise to a conformation change that activates the enzyme. The same catalytic Cys residue mediates the autoproteolytic cleavage and subsequent hydrolysis of lipid substrates. The beta chain may undergo an additional C-terminal processing.

The protein resides in the lysosome. It is found in the secreted. It carries out the reaction an N-acylsphing-4-enine + H2O = sphing-4-enine + a fatty acid. It catalyses the reaction N-dodecanoylsphing-4-enine + H2O = dodecanoate + sphing-4-enine. The catalysed reaction is N-tetradecanoylsphing-4-enine + H2O = tetradecanoate + sphing-4-enine. The enzyme catalyses N-hexadecanoylsphing-4-enine + H2O = sphing-4-enine + hexadecanoate. It carries out the reaction N-octadecanoylsphing-4-enine + H2O = sphing-4-enine + octadecanoate. It catalyses the reaction N-dodecanoyl-(4R)-hydroxysphinganine + H2O = (4R)-hydroxysphinganine + dodecanoate. The catalysed reaction is N-(dodecanoyl)-sphinganine + H2O = dodecanoate + sphinganine. The enzyme catalyses N-(acetyl)-sphing-4-enine + H2O = sphing-4-enine + acetate. It carries out the reaction N-(hexanoyl)sphing-4-enine + H2O = hexanoate + sphing-4-enine. It catalyses the reaction N-octanoylsphing-4-enine + H2O = octanoate + sphing-4-enine. The catalysed reaction is N-(9Z-octadecenoyl)-sphing-4-enine + H2O = sphing-4-enine + (9Z)-octadecenoate. The enzyme catalyses N-dodecanoylethanolamine + H2O = dodecanoate + ethanolamine. The protein operates within lipid metabolism; sphingolipid metabolism. Functionally, lysosomal ceramidase that hydrolyzes sphingolipid ceramides into sphingosine and free fatty acids at acidic pH. Ceramides, sphingosine, and its phosphorylated form sphingosine-1-phosphate are bioactive lipids that mediate cellular signaling pathways regulating several biological processes including cell proliferation, apoptosis and differentiation. Has a higher catalytic efficiency towards C12-ceramides versus other ceramides. Also catalyzes the reverse reaction allowing the synthesis of ceramides from fatty acids and sphingosine. For the reverse synthetic reaction, the natural sphingosine D-erythro isomer is more efficiently utilized as a substrate compared to D-erythro-dihydrosphingosine and D-erythro-phytosphingosine, while the fatty acids with chain lengths of 12 or 14 carbons are the most efficiently used. Also has an N-acylethanolamine hydrolase activity. By regulating the levels of ceramides, sphingosine and sphingosine-1-phosphate in the epidermis, mediates the calcium-induced differentiation of epidermal keratinocytes. Also indirectly regulates tumor necrosis factor/TNF-induced apoptosis. By regulating the intracellular balance between ceramides and sphingosine, in adrenocortical cells, probably also acts as a regulator of steroidogenesis. This chain is Acid ceramidase, found in Balaenoptera acutorostrata scammoni (North Pacific minke whale).